Reading from the N-terminus, the 494-residue chain is Potassium voltage-gated channel subfamily A member 2 (494 aa).

The disordered stretch occupies residues 1 to 25 (MTVATGDPSDEAAAHPGNPAEYDPD). The segment at 1 to 124 (MTVATGDPSD…YELGDEAIEL (124 aa)) is tetramerization domain. At 1–159 (MTVATGDPSD…LLFEYPESSG (159 aa)) the chain is on the cytoplasmic side. Residues 160–181 (PARIIAIISVMVILISIVSFCL) form a helical membrane-spanning segment. Residues 182–216 (ETLPIFRNDDDEPHSVFDTNTNTTIYFTSTYFTDP) lie on the Extracellular side of the membrane. N203 is a glycosylation site (N-linked (GlcNAc...) asparagine). A helical transmembrane segment spans residues 217–238 (FFILETLCIIWFSFEFLVRLFA). A lipid anchor (S-palmitoyl cysteine) is attached at C239. Residues 239–249 (CPSKSGFFGNV) are Cytoplasmic-facing. The helical transmembrane segment at 250-270 (MNIIDVVAIIPYFITLATELA) threads the bilayer. Residues 271–284 (EKPEDGQAGQQAMS) are Extracellular-facing. The helical; Voltage-sensor transmembrane segment at 285–305 (LAILRVIRLVRVFRIFKLSRH) threads the bilayer. The Cytoplasmic portion of the chain corresponds to 306–320 (SKGLQILGQTLKASM). Positions 307–320 (KGLQILGQTLKASM) are S4-S5 linker. The helical transmembrane segment at 321–342 (RELGLLIFFLFIGVILFSSAVY) threads the bilayer. The Extracellular portion of the chain corresponds to 343 to 356 (FAEADEPESQFESI). The segment at residues 357–368 (PDAFWWAVVSMT) is an intramembrane region (helical). The Selectivity filter signature appears at 369–374 (TVGYGD). The stretch at 369–376 (TVGYGDMV) is an intramembrane region. Residues 377 to 383 (PTTIGGK) lie on the Extracellular side of the membrane. A helical membrane pass occupies residues 384 to 412 (IVGSLCAIAGVLTIALPVPVIVSNFNYFY). At 413–494 (HRETEGEEQA…VNITKMLTDV (82 aa)) the chain is on the cytoplasmic side. The short motif at 492-494 (TDV) is the PDZ-binding element.

This sequence belongs to the potassium channel family. A (Shaker) (TC 1.A.1.2) subfamily. Kv1.2/KCNA2 sub-subfamily. Homotetramer and heterotetramer with other family members. In terms of tissue distribution, expressed in oligodendrocytes.

The protein localises to the cell membrane. It carries out the reaction K(+)(in) = K(+)(out). Functionally, voltage-gated potassium channel that mediates transmembrane potassium transport in excitable membranes, primarily in the brain and central nervous system. Prevents aberrant action potential firing and regulates neuronal output. Forms tetrameric potassium-selective channels through which potassium ions pass in accordance with their electrochemical gradient. The channel alternates between opened and closed conformations in response to the voltage difference across the membrane. Can form functional homotetrameric channels and heterotetrameric channels with other family members; the channels characteristics depend critically on the types of channel-forming alpha subunits that are present. Channel properties are modulated by cytoplasmic beta subunits that regulate the subcellular location of the alpha subunits. In vivo, membranes probably contain a mixture of heteromeric potassium channel complexes, making it difficult to assign currents observed in intact tissues to any particular potassium channel family member. Homotetrameric KCNA2 forms a delayed-rectifier potassium channel that opens in response to membrane depolarization, followed by slow spontaneous channel closure. Regulates neuronal excitability and plays a role as pacemaker in the regulation of neuronal action potentials. KCNA2-containing channels play a presynaptic role and prevent hyperexcitability and aberrant action potential firing. Response to toxins that are selective for KCNA2-containing potassium channels suggests that in Purkinje cells, dendritic subthreshold KCNA2-containing potassium channels prevent random spontaneous calcium spikes, suppressing dendritic hyperexcitability without hindering the generation of somatic action potentials, and thereby play an important role in motor coordination. Plays a role in the induction of long-term potentiation of neuron excitability in the CA3 layer of the hippocampus. The chain is Potassium voltage-gated channel subfamily A member 2 (kcna2) from Oncorhynchus mykiss (Rainbow trout).